Consider the following 271-residue polypeptide: 5'-AMP-activated protein kinase subunit beta-2 (271 aa).

The segment at 1–47 (MGNTTSERVSGERHGAKAARAEGGGHGPGKEHKIMVGSTDDPSVFSL) is disordered. Phosphoserine; by ULK1 is present on Ser38. The residue at position 39 (Thr39) is a Phosphothreonine; by ULK1. At Ser68 the chain carries Phosphoserine; by ULK1. Phosphoserine occurs at positions 94 and 107. Thr147 bears the Phosphothreonine mark. 2 positions are modified to phosphoserine: Ser157 and Ser169. Ser173 is modified (phosphoserine; by ULK1). Ser183 is subject to Phosphoserine.

The protein belongs to the 5'-AMP-activated protein kinase beta subunit family. AMPK is a heterotrimer of an alpha catalytic subunit (PRKAA1 or PRKAA2), a beta (PRKAB1 or PRKAB2) and a gamma non-catalytic subunits (PRKAG1, PRKAG2 or PRKAG3). Post-translationally, phosphorylated when associated with the catalytic subunit (PRKAA1 or PRKAA2). Phosphorylated by ULK1 and ULK2; leading to negatively regulate AMPK activity and suggesting the existence of a regulatory feedback loop between ULK1, ULK2 and AMPK.

Functionally, non-catalytic subunit of AMP-activated protein kinase (AMPK), an energy sensor protein kinase that plays a key role in regulating cellular energy metabolism. In response to reduction of intracellular ATP levels, AMPK activates energy-producing pathways and inhibits energy-consuming processes: inhibits protein, carbohydrate and lipid biosynthesis, as well as cell growth and proliferation. AMPK acts via direct phosphorylation of metabolic enzymes, and by longer-term effects via phosphorylation of transcription regulators. Also acts as a regulator of cellular polarity by remodeling the actin cytoskeleton; probably by indirectly activating myosin. Beta non-catalytic subunit acts as a scaffold on which the AMPK complex assembles, via its C-terminus that bridges alpha (PRKAA1 or PRKAA2) and gamma subunits (PRKAG1, PRKAG2 or PRKAG3). This chain is 5'-AMP-activated protein kinase subunit beta-2 (Prkab2), found in Rattus norvegicus (Rat).